The primary structure comprises 357 residues: O-methyltransferase 1, chloroplastic (357 aa).

Residues 1-53 (MPVLPWLAAAATTPVRRSPPLPATPRALLRLPASSFPPWSNCAKSGLPPRGPF) constitute a chloroplast transit peptide. Residues 50–71 (RGPFATAADTPLGGSLPEPEEE) are disordered.

This sequence belongs to the methyltransferase superfamily. LCMT family. In terms of tissue distribution, expressed in roots, leaf sheaths, flag leaves and panicles.

It localises to the plastid. The protein resides in the chloroplast. The catalysed reaction is N-acetylserotonin + S-adenosyl-L-methionine = melatonin + S-adenosyl-L-homocysteine + H(+). It participates in aromatic compound metabolism; melatonin biosynthesis; melatonin from serotonin: step 1/2. Involved in melatonin biosynthesis. Can function as acetylserotonin O-methyltransferase. Catalyzes the transfer of a methyl group onto N-acetylserotonin, producing melatonin (N-acetyl-5-methoxytryptamine). Involved in the regulation of jasmonate- and brassinosteroid-mediated plant growth and defense responses. This Oryza sativa subsp. japonica (Rice) protein is O-methyltransferase 1, chloroplastic.